We begin with the raw amino-acid sequence, 203 residues long: Peptide deformylase (203 aa).

Residues Cys130 and His173 each coordinate Fe cation. Glu174 is an active-site residue. His177 is a binding site for Fe cation.

The protein belongs to the polypeptide deformylase family. Fe(2+) serves as cofactor.

It catalyses the reaction N-terminal N-formyl-L-methionyl-[peptide] + H2O = N-terminal L-methionyl-[peptide] + formate. Functionally, removes the formyl group from the N-terminal Met of newly synthesized proteins. Requires at least a dipeptide for an efficient rate of reaction. N-terminal L-methionine is a prerequisite for activity but the enzyme has broad specificity at other positions. The chain is Peptide deformylase from Streptococcus pneumoniae serotype 4 (strain ATCC BAA-334 / TIGR4).